A 156-amino-acid chain; its full sequence is Cyanate hydratase (156 aa).

Catalysis depends on residues arginine 96, glutamate 99, and serine 122.

It belongs to the cyanase family.

It catalyses the reaction cyanate + hydrogencarbonate + 3 H(+) = NH4(+) + 2 CO2. Catalyzes the reaction of cyanate with bicarbonate to produce ammonia and carbon dioxide. The polypeptide is Cyanate hydratase (Burkholderia lata (strain ATCC 17760 / DSM 23089 / LMG 22485 / NCIMB 9086 / R18194 / 383)).